A 422-amino-acid chain; its full sequence is Enolase (422 aa).

Glutamine 161 is a binding site for (2R)-2-phosphoglycerate. The active-site Proton donor is the glutamate 203. Positions 240, 283, and 310 each coordinate Mg(2+). (2R)-2-phosphoglycerate contacts are provided by lysine 335, arginine 364, serine 365, and lysine 386. Lysine 335 serves as the catalytic Proton acceptor.

The protein belongs to the enolase family. Requires Mg(2+) as cofactor.

The protein localises to the cytoplasm. The protein resides in the secreted. It is found in the cell surface. The enzyme catalyses (2R)-2-phosphoglycerate = phosphoenolpyruvate + H2O. It participates in carbohydrate degradation; glycolysis; pyruvate from D-glyceraldehyde 3-phosphate: step 4/5. In terms of biological role, catalyzes the reversible conversion of 2-phosphoglycerate (2-PG) into phosphoenolpyruvate (PEP). It is essential for the degradation of carbohydrates via glycolysis. This is Enolase from Deinococcus deserti (strain DSM 17065 / CIP 109153 / LMG 22923 / VCD115).